A 255-amino-acid chain; its full sequence is 5'-nucleotidase SurE (255 aa).

4 residues coordinate a divalent metal cation: D8, D9, S40, and N93.

This sequence belongs to the SurE nucleotidase family. It depends on a divalent metal cation as a cofactor.

It is found in the cytoplasm. It catalyses the reaction a ribonucleoside 5'-phosphate + H2O = a ribonucleoside + phosphate. In terms of biological role, nucleotidase that shows phosphatase activity on nucleoside 5'-monophosphates. The sequence is that of 5'-nucleotidase SurE from Rhodopseudomonas palustris (strain BisA53).